Reading from the N-terminus, the 608-residue chain is Bifunctional lycopene cyclase/phytoene synthase (608 aa).

The segment at methionine 1–arginine 240 is lycopene beta-cyclase. 7 helical membrane passes run isoleucine 3–tryptophan 23, tyrosine 37–valine 56, tyrosine 80–valine 97, leucine 117–leucine 137, isoleucine 150–leucine 170, alanine 175–isoleucine 195, and valine 218–isoleucine 238. The tract at residues leucine 247–aspartate 608 is phytoene synthase.

It in the N-terminal section; belongs to the lycopene beta-cyclase family. This sequence in the C-terminal section; belongs to the phytoene/squalene synthase family.

The protein localises to the membrane. It catalyses the reaction all-trans-lycopene = gamma-carotene. The catalysed reaction is gamma-carotene = all-trans-beta-carotene. It carries out the reaction 2 (2E,6E,10E)-geranylgeranyl diphosphate = 15-cis-phytoene + 2 diphosphate. Its pathway is carotenoid biosynthesis; beta-carotene biosynthesis. It functions in the pathway carotenoid biosynthesis; phytoene biosynthesis; all-trans-phytoene from geranylgeranyl diphosphate: step 1/1. Functionally, bifunctional enzyme that catalyzes the reactions from geranylgeranyl diphosphate to phytoene (phytoene synthase) and lycopene to beta-carotene via the intermediate gamma-carotene (lycopene cyclase). This chain is Bifunctional lycopene cyclase/phytoene synthase, found in Blakeslea trispora (Choanephora trispora).